Consider the following 321-residue polypeptide: ATP-dependent 6-phosphofructokinase (321 aa).

Gly-11 contacts ATP. Position 21–25 (21–25 (RAVVR)) interacts with ADP. ATP-binding positions include 72–73 (RC) and 102–105 (GDGS). A Mg(2+)-binding site is contributed by Asp-103. A substrate-binding site is contributed by 126-128 (TID). Asp-128 functions as the Proton acceptor in the catalytic mechanism. Arg-155 is a binding site for ADP. Substrate contacts are provided by residues Arg-163 and 170–172 (MGR). Residues 186–188 (GAE), Arg-212, and 214–216 (KLH) each bind ADP. Residues Glu-223, Arg-245, and 251–254 (HIQR) each bind substrate.

The protein belongs to the phosphofructokinase type A (PFKA) family. ATP-dependent PFK group I subfamily. Prokaryotic clade 'B1' sub-subfamily. Homotetramer. Mg(2+) serves as cofactor.

It is found in the cytoplasm. The enzyme catalyses beta-D-fructose 6-phosphate + ATP = beta-D-fructose 1,6-bisphosphate + ADP + H(+). The protein operates within carbohydrate degradation; glycolysis; D-glyceraldehyde 3-phosphate and glycerone phosphate from D-glucose: step 3/4. Its activity is regulated as follows. Allosterically activated by ADP and other diphosphonucleosides, and allosterically inhibited by phosphoenolpyruvate. Functionally, catalyzes the phosphorylation of D-fructose 6-phosphate to fructose 1,6-bisphosphate by ATP, the first committing step of glycolysis. The protein is ATP-dependent 6-phosphofructokinase of Thermoanaerobacter pseudethanolicus (strain ATCC 33223 / 39E) (Clostridium thermohydrosulfuricum).